The chain runs to 506 residues: Adenylosuccinate synthetase (506 aa).

GTP-binding positions include 35 to 41 (GDEGKGK) and 63 to 65 (GHT). Residue aspartate 36 is the Proton acceptor of the active site. Aspartate 36 and glycine 63 together coordinate Mg(2+). IMP contacts are provided by residues 36-39 (DEGK), 61-64 (NAGH), threonine 212, arginine 226, asparagine 304, threonine 319, and arginine 383. The active-site Proton donor is histidine 64. Residue 379–385 (VTTKRKR) participates in substrate binding. Residues arginine 385, 411 to 413 (KLD), and 494 to 496 (GVG) contribute to the GTP site.

This sequence belongs to the adenylosuccinate synthetase family. In terms of assembly, homodimer. Mg(2+) is required as a cofactor.

The protein localises to the cytoplasm. It carries out the reaction IMP + L-aspartate + GTP = N(6)-(1,2-dicarboxyethyl)-AMP + GDP + phosphate + 2 H(+). It functions in the pathway purine metabolism; AMP biosynthesis via de novo pathway; AMP from IMP: step 1/2. Functionally, plays an important role in the de novo pathway and in the salvage pathway of purine nucleotide biosynthesis. Catalyzes the first committed step in the biosynthesis of AMP from IMP. The polypeptide is Adenylosuccinate synthetase (Drosophila yakuba (Fruit fly)).